A 311-amino-acid polypeptide reads, in one-letter code: Putative S-adenosyl-L-methionine-dependent methyltransferase MRA_0152 (311 aa).

S-adenosyl-L-methionine is bound by residues Asp-135 and 164 to 165; that span reads DL.

This sequence belongs to the UPF0677 family.

Its function is as follows. Exhibits S-adenosyl-L-methionine-dependent methyltransferase activity. The sequence is that of Putative S-adenosyl-L-methionine-dependent methyltransferase MRA_0152 from Mycobacterium tuberculosis (strain ATCC 25177 / H37Ra).